The sequence spans 67 residues: Large ribosomal subunit protein eL38 (67 aa).

Belongs to the eukaryotic ribosomal protein eL38 family.

This is Large ribosomal subunit protein eL38 (rpl38e) from Aeropyrum pernix (strain ATCC 700893 / DSM 11879 / JCM 9820 / NBRC 100138 / K1).